We begin with the raw amino-acid sequence, 807 residues long: Leucine--tRNA ligase (807 aa).

Positions 40–51 match the 'HIGH' region motif; the sequence is PYPSGQGLHVGH. The 'KMSKS' region motif lies at 575 to 579; that stretch reads KMSKS. Residue Lys-578 coordinates ATP.

This sequence belongs to the class-I aminoacyl-tRNA synthetase family.

It localises to the cytoplasm. It carries out the reaction tRNA(Leu) + L-leucine + ATP = L-leucyl-tRNA(Leu) + AMP + diphosphate. This chain is Leucine--tRNA ligase, found in Latilactobacillus sakei subsp. sakei (strain 23K) (Lactobacillus sakei subsp. sakei).